We begin with the raw amino-acid sequence, 327 residues long: Phosphate acyltransferase (327 aa).

The protein belongs to the PlsX family. As to quaternary structure, homodimer. Probably interacts with PlsY.

It is found in the cytoplasm. The enzyme catalyses a fatty acyl-[ACP] + phosphate = an acyl phosphate + holo-[ACP]. Its pathway is lipid metabolism; phospholipid metabolism. Its function is as follows. Catalyzes the reversible formation of acyl-phosphate (acyl-PO(4)) from acyl-[acyl-carrier-protein] (acyl-ACP). This enzyme utilizes acyl-ACP as fatty acyl donor, but not acyl-CoA. The chain is Phosphate acyltransferase from Mycoplasma mobile (strain ATCC 43663 / 163K / NCTC 11711) (Mesomycoplasma mobile).